The chain runs to 36 residues: Potassium channel toxin alpha-KTx 6.14 (36 aa).

Intrachain disulfides connect Cys-5/Cys-25, Cys-11/Cys-30, Cys-15/Cys-32, and Cys-20/Cys-35.

As to expression, expressed by the venom gland.

It is found in the secreted. Its function is as follows. Blocks Shaker B channels expressed in Sf9 cells, with a dissociation constant of 52 nM. This is Potassium channel toxin alpha-KTx 6.14 from Hoffmannihadrurus gertschi (Scorpion).